The sequence spans 421 residues: Mannose-1-phosphate guanylyltransferase regulatory subunit alpha (421 aa).

Positions 2–252 are substrate-binding domain; sequence LKAVILIGGP…EGCWSQIKSA (251 aa). GDP-alpha-D-mannose contacts are provided by glutamate 85 and glutamine 248. The hexapeptide repeat domain stretch occupies residues 274 to 421; that stretch reads LASTKEGGPT…SRSFKNQIIL (148 aa). The interval 357-385 is C-loop; that stretch reads TPSDPNPNDPYSKIDSETLFREGKLTPSI.

Belongs to the transferase hexapeptide repeat family. In terms of assembly, component of the GMPPA-GMPPB mannose-1-phosphate guanylyltransferase complex composed of 4 gmppa subunits and 8 gmppb subunits; the complex is organized into three layers, a central layer made up of 2 gmppa dimers sandwiched between two layers each made up of 2 gmppb dimers.

The protein resides in the cytoplasm. Regulatory subunit of the GMPPA-GMPPB mannose-1-phosphate guanylyltransferase complex; reduces the catalytic activity of GMPPB when part of the complex. Mediates allosteric feedback inhibition of GMPPB catalytic activity upon binding GDP-alpha-D-mannose. Together with GMPPB regulates GDP-alpha-D-mannose levels. The protein is Mannose-1-phosphate guanylyltransferase regulatory subunit alpha (gmppa) of Xenopus tropicalis (Western clawed frog).